An 85-amino-acid chain; its full sequence is Turripeptide PaIAa (85 aa).

Belongs to the turripeptide family. Expressed by the venom duct.

The protein localises to the secreted. Functionally, is lethal to drosophila larvae. The protein is Turripeptide PaIAa of Polystira albida (White giant-turris).